The primary structure comprises 132 residues: Phosphomevalonate dehydratase small subunit (132 aa).

Ser-61 functions as the Proton acceptor in the catalytic mechanism.

This sequence belongs to the AcnX type II small subunit family. As to quaternary structure, heterodimer composed of a large subunit (PMDh-L) and a small subunit (PMDh-S).

It carries out the reaction (R)-5-phosphomevalonate = (2E)-3-methyl-5-phosphooxypent-2-enoate + H2O. It functions in the pathway isoprenoid biosynthesis; isopentenyl diphosphate biosynthesis via mevalonate pathway. In terms of biological role, component of a hydro-lyase that catalyzes the dehydration of mevalonate 5-phosphate (MVA5P) to form trans-anhydromevalonate 5-phosphate (tAHMP). Involved in the archaeal mevalonate (MVA) pathway, which provides fundamental precursors for isoprenoid biosynthesis, such as isopentenyl diphosphate (IPP) and dimethylallyl diphosphate (DMAPP). This chain is Phosphomevalonate dehydratase small subunit, found in Archaeoglobus fulgidus (strain ATCC 49558 / DSM 4304 / JCM 9628 / NBRC 100126 / VC-16).